The following is a 186-amino-acid chain: Ribosome-recycling factor (186 aa).

This sequence belongs to the RRF family.

It is found in the cytoplasm. Functionally, responsible for the release of ribosomes from messenger RNA at the termination of protein biosynthesis. May increase the efficiency of translation by recycling ribosomes from one round of translation to another. The protein is Ribosome-recycling factor of Wolinella succinogenes (strain ATCC 29543 / DSM 1740 / CCUG 13145 / JCM 31913 / LMG 7466 / NCTC 11488 / FDC 602W) (Vibrio succinogenes).